Here is a 257-residue protein sequence, read N- to C-terminus: Thiazole synthase (257 aa).

The Schiff-base intermediate with DXP role is filled by Lys100. 1-deoxy-D-xylulose 5-phosphate is bound by residues Gly161, 187–188 (AG), and 209–210 (NT).

It belongs to the ThiG family. As to quaternary structure, homotetramer. Forms heterodimers with either ThiH or ThiS.

The protein resides in the cytoplasm. It catalyses the reaction [ThiS sulfur-carrier protein]-C-terminal-Gly-aminoethanethioate + 2-iminoacetate + 1-deoxy-D-xylulose 5-phosphate = [ThiS sulfur-carrier protein]-C-terminal Gly-Gly + 2-[(2R,5Z)-2-carboxy-4-methylthiazol-5(2H)-ylidene]ethyl phosphate + 2 H2O + H(+). The protein operates within cofactor biosynthesis; thiamine diphosphate biosynthesis. Functionally, catalyzes the rearrangement of 1-deoxy-D-xylulose 5-phosphate (DXP) to produce the thiazole phosphate moiety of thiamine. Sulfur is provided by the thiocarboxylate moiety of the carrier protein ThiS. In vitro, sulfur can be provided by H(2)S. This Pelagibacter ubique (strain HTCC1062) protein is Thiazole synthase.